Here is a 436-residue protein sequence, read N- to C-terminus: 3-ketoacyl-CoA thiolase (436 aa).

Cysteine 99 (acyl-thioester intermediate) is an active-site residue. Catalysis depends on proton acceptor residues histidine 392 and cysteine 422.

Belongs to the thiolase-like superfamily. Thiolase family. In terms of assembly, heterotetramer of two alpha chains (FadJ) and two beta chains (FadI).

The protein localises to the cytoplasm. It catalyses the reaction an acyl-CoA + acetyl-CoA = a 3-oxoacyl-CoA + CoA. Its pathway is lipid metabolism; fatty acid beta-oxidation. Its function is as follows. Catalyzes the final step of fatty acid oxidation in which acetyl-CoA is released and the CoA ester of a fatty acid two carbons shorter is formed. The polypeptide is 3-ketoacyl-CoA thiolase (Alteromonas mediterranea (strain DSM 17117 / CIP 110805 / LMG 28347 / Deep ecotype)).